A 107-amino-acid polypeptide reads, in one-letter code: Glutaredoxin 4 (107 aa).

Residues 4–106 (LDKIKKQISE…TLLAEVAAKH (103 aa)) enclose the Glutaredoxin domain. Glutathione is bound at residue Lys21. Position 29 (Cys29) interacts with [2Fe-2S] cluster. Glutathione is bound by residues Arg58, Phe70, and 83–84 (CD).

This sequence belongs to the glutaredoxin family. Monothiol subfamily. As to quaternary structure, homodimer.

The protein localises to the cytoplasm. Functionally, monothiol glutaredoxin involved in the biogenesis of iron-sulfur clusters. The polypeptide is Glutaredoxin 4 (grxD) (Haemophilus influenzae (strain 86-028NP)).